A 278-amino-acid polypeptide reads, in one-letter code: Large ribosomal subunit protein uL2 (278 aa).

2 disordered regions span residues 29–53 (PVKSLTEGKRKTGGRNNKGHVTSRG) and 221–278 (RGVA…KKKR). A compositionally biased stretch (basic residues) spans 269 to 278 (IRSRHAKKKR).

This sequence belongs to the universal ribosomal protein uL2 family. As to quaternary structure, part of the 50S ribosomal subunit. Forms a bridge to the 30S subunit in the 70S ribosome.

One of the primary rRNA binding proteins. Required for association of the 30S and 50S subunits to form the 70S ribosome, for tRNA binding and peptide bond formation. It has been suggested to have peptidyltransferase activity; this is somewhat controversial. Makes several contacts with the 16S rRNA in the 70S ribosome. The protein is Large ribosomal subunit protein uL2 of Erythrobacter litoralis (strain HTCC2594).